The following is a 78-amino-acid chain: Acyl carrier protein (78 aa).

One can recognise a Carrier domain in the interval 2–77 (DNIVERVKKI…QAVDYILAGK (76 aa)). Ser37 carries the post-translational modification O-(pantetheine 4'-phosphoryl)serine.

Belongs to the acyl carrier protein (ACP) family. 4'-phosphopantetheine is transferred from CoA to a specific serine of apo-ACP by AcpS. This modification is essential for activity because fatty acids are bound in thioester linkage to the sulfhydryl of the prosthetic group.

The protein localises to the cytoplasm. It participates in lipid metabolism; fatty acid biosynthesis. In terms of biological role, carrier of the growing fatty acid chain in fatty acid biosynthesis. This chain is Acyl carrier protein, found in Dechloromonas aromatica (strain RCB).